The chain runs to 105 residues: Putative RNA-binding protein RbpF (105 aa).

In terms of domain architecture, RRM spans 2-79 (SIYVGNLSYE…RDLKVNKAKP (78 aa)). The segment covering 75-84 (NKAKPKEDRG) has biased composition (basic and acidic residues). The interval 75–105 (NKAKPKEDRGSFGGGNRGGYGGGGGGGRSRY) is disordered. Over residues 85–105 (SFGGGNRGGYGGGGGGGRSRY) the composition is skewed to gly residues.

The polypeptide is Putative RNA-binding protein RbpF (rbpF) (Nostoc sp. (strain PCC 7120 / SAG 25.82 / UTEX 2576)).